The primary structure comprises 78 residues: D-alanyl carrier protein (78 aa).

The region spanning 1-78 (MEFKQEVLDV…NIVNKLTELK (78 aa)) is the Carrier domain. Serine 36 is modified (O-(pantetheine 4'-phosphoryl)serine).

The protein belongs to the DltC family. Post-translationally, 4'-phosphopantetheine is transferred from CoA to a specific serine of apo-DCP.

It is found in the cytoplasm. It functions in the pathway cell wall biogenesis; lipoteichoic acid biosynthesis. In terms of biological role, carrier protein involved in the D-alanylation of lipoteichoic acid (LTA). The loading of thioester-linked D-alanine onto DltC is catalyzed by D-alanine--D-alanyl carrier protein ligase DltA. The DltC-carried D-alanyl group is further transferred to cell membrane phosphatidylglycerol (PG) by forming an ester bond, probably catalyzed by DltD. D-alanylation of LTA plays an important role in modulating the properties of the cell wall in Gram-positive bacteria, influencing the net charge of the cell wall. The protein is D-alanyl carrier protein of Bacillus velezensis (strain DSM 23117 / BGSC 10A6 / LMG 26770 / FZB42) (Bacillus amyloliquefaciens subsp. plantarum).